We begin with the raw amino-acid sequence, 411 residues long: Argininosuccinate synthase (411 aa).

An ATP-binding site is contributed by 11–19 (AYSGGLDTS). Tyr88 serves as a coordination point for L-citrulline. Residue Gly118 coordinates ATP. L-aspartate is bound by residues Thr120, Asn124, and Asp125. An L-citrulline-binding site is contributed by Asn124. The L-citrulline site is built by Arg128, Ser176, Glu261, and Tyr273.

The protein belongs to the argininosuccinate synthase family. Type 1 subfamily. Homotetramer.

It localises to the cytoplasm. It catalyses the reaction L-citrulline + L-aspartate + ATP = 2-(N(omega)-L-arginino)succinate + AMP + diphosphate + H(+). The protein operates within amino-acid biosynthesis; L-arginine biosynthesis; L-arginine from L-ornithine and carbamoyl phosphate: step 2/3. This Lactiplantibacillus plantarum (strain ATCC BAA-793 / NCIMB 8826 / WCFS1) (Lactobacillus plantarum) protein is Argininosuccinate synthase.